We begin with the raw amino-acid sequence, 733 residues long: Phosphoribosylformylglycinamidine synthase subunit PurL (733 aa).

Residue histidine 44 is part of the active site. Residues tyrosine 47 and lysine 86 each coordinate ATP. Glutamate 88 is a Mg(2+) binding site. Residues 89 to 92 (SHNH) and arginine 111 contribute to the substrate site. Histidine 90 functions as the Proton acceptor in the catalytic mechanism. Residue aspartate 112 participates in Mg(2+) binding. Glutamine 240 is a substrate binding site. Residue aspartate 268 participates in Mg(2+) binding. 312–314 (ESQ) serves as a coordination point for substrate. Aspartate 496 and glycine 533 together coordinate ATP. A Mg(2+)-binding site is contributed by asparagine 534. Serine 536 is a substrate binding site.

This sequence belongs to the FGAMS family. Monomer. Part of the FGAM synthase complex composed of 1 PurL, 1 PurQ and 2 PurS subunits.

It is found in the cytoplasm. It carries out the reaction N(2)-formyl-N(1)-(5-phospho-beta-D-ribosyl)glycinamide + L-glutamine + ATP + H2O = 2-formamido-N(1)-(5-O-phospho-beta-D-ribosyl)acetamidine + L-glutamate + ADP + phosphate + H(+). Its pathway is purine metabolism; IMP biosynthesis via de novo pathway; 5-amino-1-(5-phospho-D-ribosyl)imidazole from N(2)-formyl-N(1)-(5-phospho-D-ribosyl)glycinamide: step 1/2. Its function is as follows. Part of the phosphoribosylformylglycinamidine synthase complex involved in the purines biosynthetic pathway. Catalyzes the ATP-dependent conversion of formylglycinamide ribonucleotide (FGAR) and glutamine to yield formylglycinamidine ribonucleotide (FGAM) and glutamate. The FGAM synthase complex is composed of three subunits. PurQ produces an ammonia molecule by converting glutamine to glutamate. PurL transfers the ammonia molecule to FGAR to form FGAM in an ATP-dependent manner. PurS interacts with PurQ and PurL and is thought to assist in the transfer of the ammonia molecule from PurQ to PurL. This Wolinella succinogenes (strain ATCC 29543 / DSM 1740 / CCUG 13145 / JCM 31913 / LMG 7466 / NCTC 11488 / FDC 602W) (Vibrio succinogenes) protein is Phosphoribosylformylglycinamidine synthase subunit PurL.